A 120-amino-acid chain; its full sequence is Large ribosomal subunit protein uL24 (120 aa).

The protein belongs to the universal ribosomal protein uL24 family. Part of the 50S ribosomal subunit.

In terms of biological role, one of two assembly initiator proteins, it binds directly to the 5'-end of the 23S rRNA, where it nucleates assembly of the 50S subunit. Located at the polypeptide exit tunnel on the outside of the subunit. This is Large ribosomal subunit protein uL24 from Methanocaldococcus jannaschii (strain ATCC 43067 / DSM 2661 / JAL-1 / JCM 10045 / NBRC 100440) (Methanococcus jannaschii).